The primary structure comprises 346 residues: Thiamine-phosphate synthase (346 aa).

The tract at residues 1–125 is unknown; the sequence is MSVTPNPDQH…SKISAQIRYE (125 aa). Positions 126 to 346 are thiamine-phosphate synthase; the sequence is IYDLEVIILK…SKELLGKLKK (221 aa). 4-amino-2-methyl-5-(diphosphooxymethyl)pyrimidine-binding positions include 177–181 and N209; that span reads QYRCK. D210 and D229 together coordinate Mg(2+). A 4-amino-2-methyl-5-(diphosphooxymethyl)pyrimidine-binding site is contributed by S248. Residue 274–276 participates in 2-[(2R,5Z)-2-carboxy-4-methylthiazol-5(2H)-ylidene]ethyl phosphate binding; it reads TKS. Residue K277 coordinates 4-amino-2-methyl-5-(diphosphooxymethyl)pyrimidine. Residue G304 coordinates 2-[(2R,5Z)-2-carboxy-4-methylthiazol-5(2H)-ylidene]ethyl phosphate.

The protein belongs to the thiamine-phosphate synthase family. Requires Mg(2+) as cofactor.

It carries out the reaction 2-[(2R,5Z)-2-carboxy-4-methylthiazol-5(2H)-ylidene]ethyl phosphate + 4-amino-2-methyl-5-(diphosphooxymethyl)pyrimidine + 2 H(+) = thiamine phosphate + CO2 + diphosphate. The enzyme catalyses 2-(2-carboxy-4-methylthiazol-5-yl)ethyl phosphate + 4-amino-2-methyl-5-(diphosphooxymethyl)pyrimidine + 2 H(+) = thiamine phosphate + CO2 + diphosphate. It catalyses the reaction 4-methyl-5-(2-phosphooxyethyl)-thiazole + 4-amino-2-methyl-5-(diphosphooxymethyl)pyrimidine + H(+) = thiamine phosphate + diphosphate. It participates in cofactor biosynthesis; thiamine diphosphate biosynthesis; thiamine phosphate from 4-amino-2-methyl-5-diphosphomethylpyrimidine and 4-methyl-5-(2-phosphoethyl)-thiazole: step 1/1. Its function is as follows. Condenses 4-methyl-5-(beta-hydroxyethyl)thiazole monophosphate (THZ-P) and 2-methyl-4-amino-5-hydroxymethyl pyrimidine pyrophosphate (HMP-PP) to form thiamine monophosphate (TMP). The polypeptide is Thiamine-phosphate synthase (Prochlorococcus marinus (strain SARG / CCMP1375 / SS120)).